The sequence spans 1427 residues: Protein expanded (1427 aa).

The 374-residue stretch at 26-399 folds into the FERM domain; sequence RFLALRLLGQ…DTHQWSMKLA (374 aa). The segment at 176-212 is disordered; that stretch reads GDAPPGTSNSKDDSGEETSASPSNGGRGLSATTTLPK. The segment covering 192–211 has biased composition (polar residues); it reads ETSASPSNGGRGLSATTTLP. 2 positions are modified to phosphotyrosine: tyrosine 227 and tyrosine 423. Disordered stretches follow at residues 520–566 and 611–656; these read VRPQ…IGSQ and NSAL…SGVY. Residues 524–544 are compositionally biased toward polar residues; sequence DASSNGATIVTNSSVQRNSMG. Over residues 545–559 the composition is skewed to low complexity; the sequence is TTANDSSTATDSPSS. Tyrosine 679 bears the Phosphotyrosine mark. Positions 688–710 are enriched in basic and acidic residues; the sequence is EETHVQHSDSVDGKKKEDFRPRS. 5 disordered regions span residues 688 to 732, 766 to 792, 815 to 880, 939 to 963, and 1000 to 1022; these read EETH…DNKH, YVTLPLGDQGEEEVDQPPAPPPPYSAR, APKP…SLKS, HNSNYAGGSQASLHHHHVPSHHRHS, and LAPPPPSLPRQPPPPPPPNHPHL. Phosphotyrosine is present on tyrosine 766. Residues 818–838 are compositionally biased toward pro residues; the sequence is PDSPPCSPPVPPAPIPAPPPA. Positions 842–847 match the RXPPXY motif motif; the sequence is RDPPPY. The segment covering 848–859 has biased composition (polar residues); that stretch reads SISSKPRPTSLI. Residues 860–877 are compositionally biased toward low complexity; the sequence is SVSSSAHPAPSAAGSMSS. The segment covering 951 to 963 has biased composition (basic residues); it reads LHHHHVPSHHRHS. A compositionally biased stretch (pro residues) spans 1001 to 1019; the sequence is APPPPSLPRQPPPPPPPNH. The SH3-binding signature appears at 1008–1020; that stretch reads PRQPPPPPPPNHP. At tyrosine 1103 the chain carries Phosphotyrosine. Positions 1149–1157 match the SH3-binding motif; that stretch reads PPPPPPLHP. Residue serine 1181 is modified to Phosphoserine. 2 disordered regions span residues 1190-1267 and 1345-1398; these read DLLP…WAGE and TGQE…LPVQ. 2 stretches are compositionally biased toward pro residues: residues 1214–1230 and 1237–1246; these read PPMPAPSEKPPPIPSKP and PIPPRKPPTL. 2 stretches are compositionally biased toward polar residues: residues 1253–1262 and 1345–1370; these read SPLTKTSSGA and TGQEMPTSSAQPSGATTNGVANSSAG. Basic residues predominate over residues 1376–1388; it reads KARKGSTVSHRHP.

As to quaternary structure, forms a complex with Kibra and Mer. Interacts (via RXPPXY motif) with Kibra (via domain WW 1). Interacts with Mer and Hpo (via SARAH domain). Interacts with Schip1; the interaction results in recruitment of Schip1 to the apical cell membrane. Interacts with ack and yki. Post-translationally, phosphorylated by Ack at several tyrosines including Tyr-227, Tyr-423, Tyr-679, Tyr-766 and Tyr-1103.

The protein resides in the apical cell membrane. Functionally, activates the Hippo/SWH (Sav/Wts/Hpo) signaling pathway, a signaling pathway that plays a pivotal role in organ size control and tumor suppression by restricting proliferation and promoting apoptosis. The core of this pathway is composed of a kinase cascade wherein Hippo (Hpo), in complex with its regulatory protein Salvador (Sav), phosphorylates and activates Warts (Wts) in complex with its regulatory protein Mats, which in turn phosphorylates and inactivates the Yorkie (Yki) oncoprotein. Ex acts synergistically along with Mer and Kibra to regulate the Hippo signaling pathway. Involved in the control of cell proliferation in imaginal disks. May bind to certain proteins of signal transduction pathways by interaction with their SH3 domains. Required for apical localization of Schip1. The polypeptide is Protein expanded (ex) (Drosophila melanogaster (Fruit fly)).